The chain runs to 434 residues: ATP-dependent protease ATPase subunit HslU (434 aa).

Residues Val-18, 60-65 (GVGKTE), Asp-247, Glu-312, and Arg-384 contribute to the ATP site.

This sequence belongs to the ClpX chaperone family. HslU subfamily. In terms of assembly, a double ring-shaped homohexamer of HslV is capped on each side by a ring-shaped HslU homohexamer. The assembly of the HslU/HslV complex is dependent on binding of ATP.

Its subcellular location is the cytoplasm. Functionally, ATPase subunit of a proteasome-like degradation complex; this subunit has chaperone activity. The binding of ATP and its subsequent hydrolysis by HslU are essential for unfolding of protein substrates subsequently hydrolyzed by HslV. HslU recognizes the N-terminal part of its protein substrates and unfolds these before they are guided to HslV for hydrolysis. This is ATP-dependent protease ATPase subunit HslU from Hyphomonas neptunium (strain ATCC 15444).